The primary structure comprises 663 residues: Endopolyphosphatase (663 aa).

Topologically, residues 1–14 (MAVNEKDVGRKSRV) are cytoplasmic. Residues 15 to 35 (SVVLWVFIALGTLFLCKNAFT) form a helical; Signal-anchor for type II membrane protein membrane-spanning segment. Over 36 to 663 (FSSESIHGLK…ISTGYEDERN (628 aa)) the chain is Vacuolar. N-linked (GlcNAc...) asparagine glycosylation is found at Asn-487 and Asn-526. The segment at 534–564 (SAEQNKKKKKKNGKPDKSIPRKKPDELPAGP) is disordered. Residues 546–559 (GKPDKSIPRKKPDE) show a composition bias toward basic and acidic residues.

It belongs to the endopolyphosphatase PPN1 family. It depends on a divalent metal cation as a cofactor. Post-translationally, processing by proteases in the vacuole may be required for activation.

The protein resides in the vacuole membrane. The enzyme catalyses [phosphate](n+1) + n H2O = (n+1) phosphate + n H(+). In terms of biological role, catalyzes the hydrolysis of inorganic polyphosphate (polyP) chains of many hundreds of phosphate residues into shorter lengths. The chain is Endopolyphosphatase (PPN1) from Candida glabrata (strain ATCC 2001 / BCRC 20586 / JCM 3761 / NBRC 0622 / NRRL Y-65 / CBS 138) (Yeast).